The following is a 245-amino-acid chain: 1-(5-phosphoribosyl)-5-[(5-phosphoribosylamino)methylideneamino] imidazole-4-carboxamide isomerase (245 aa).

The Proton acceptor role is filled by aspartate 11. Residue aspartate 132 is the Proton donor of the active site.

It belongs to the HisA/HisF family.

It localises to the cytoplasm. The catalysed reaction is 1-(5-phospho-beta-D-ribosyl)-5-[(5-phospho-beta-D-ribosylamino)methylideneamino]imidazole-4-carboxamide = 5-[(5-phospho-1-deoxy-D-ribulos-1-ylimino)methylamino]-1-(5-phospho-beta-D-ribosyl)imidazole-4-carboxamide. It functions in the pathway amino-acid biosynthesis; L-histidine biosynthesis; L-histidine from 5-phospho-alpha-D-ribose 1-diphosphate: step 4/9. The chain is 1-(5-phosphoribosyl)-5-[(5-phosphoribosylamino)methylideneamino] imidazole-4-carboxamide isomerase from Bacillus licheniformis (strain ATCC 14580 / DSM 13 / JCM 2505 / CCUG 7422 / NBRC 12200 / NCIMB 9375 / NCTC 10341 / NRRL NRS-1264 / Gibson 46).